Here is a 269-residue protein sequence, read N- to C-terminus: Tryptophan synthase alpha chain (269 aa).

Catalysis depends on proton acceptor residues E49 and D60.

The protein belongs to the TrpA family. In terms of assembly, tetramer of two alpha and two beta chains.

It carries out the reaction (1S,2R)-1-C-(indol-3-yl)glycerol 3-phosphate + L-serine = D-glyceraldehyde 3-phosphate + L-tryptophan + H2O. Its pathway is amino-acid biosynthesis; L-tryptophan biosynthesis; L-tryptophan from chorismate: step 5/5. Its function is as follows. The alpha subunit is responsible for the aldol cleavage of indoleglycerol phosphate to indole and glyceraldehyde 3-phosphate. This Buchnera aphidicola subsp. Schlechtendalia chinensis protein is Tryptophan synthase alpha chain.